The following is a 256-amino-acid chain: Type III pantothenate kinase (256 aa).

Position 6–13 (6–13 (DVGNSNIV)) interacts with ATP. Residues tyrosine 100 and 107–110 (GADR) each bind substrate. Aspartate 109 functions as the Proton acceptor in the catalytic mechanism. Aspartate 129 serves as a coordination point for K(+). Threonine 132 serves as a coordination point for ATP. Threonine 184 is a binding site for substrate.

The protein belongs to the type III pantothenate kinase family. In terms of assembly, homodimer. Requires NH4(+) as cofactor. K(+) serves as cofactor.

The protein localises to the cytoplasm. It carries out the reaction (R)-pantothenate + ATP = (R)-4'-phosphopantothenate + ADP + H(+). The protein operates within cofactor biosynthesis; coenzyme A biosynthesis; CoA from (R)-pantothenate: step 1/5. Its function is as follows. Catalyzes the phosphorylation of pantothenate (Pan), the first step in CoA biosynthesis. This chain is Type III pantothenate kinase, found in Geotalea daltonii (strain DSM 22248 / JCM 15807 / FRC-32) (Geobacter daltonii).